A 154-amino-acid polypeptide reads, in one-letter code: 6,7-dimethyl-8-ribityllumazine synthase (154 aa).

5-amino-6-(D-ribitylamino)uracil-binding positions include phenylalanine 15, 47–49 (TFD), and 71–73 (AVI). Residue 76-77 (ET) participates in (2S)-2-hydroxy-3-oxobutyl phosphate binding. The active-site Proton donor is the histidine 79. Leucine 104 is a binding site for 5-amino-6-(D-ribitylamino)uracil. Residue arginine 119 participates in (2S)-2-hydroxy-3-oxobutyl phosphate binding.

It belongs to the DMRL synthase family.

The catalysed reaction is (2S)-2-hydroxy-3-oxobutyl phosphate + 5-amino-6-(D-ribitylamino)uracil = 6,7-dimethyl-8-(1-D-ribityl)lumazine + phosphate + 2 H2O + H(+). It functions in the pathway cofactor biosynthesis; riboflavin biosynthesis; riboflavin from 2-hydroxy-3-oxobutyl phosphate and 5-amino-6-(D-ribitylamino)uracil: step 1/2. Catalyzes the formation of 6,7-dimethyl-8-ribityllumazine by condensation of 5-amino-6-(D-ribitylamino)uracil with 3,4-dihydroxy-2-butanone 4-phosphate. This is the penultimate step in the biosynthesis of riboflavin. This is 6,7-dimethyl-8-ribityllumazine synthase from Saccharolobus islandicus (strain M.16.27) (Sulfolobus islandicus).